A 441-amino-acid polypeptide reads, in one-letter code: Zinc finger protein ZIC 3 (441 aa).

The C2H2-type 1; atypical zinc finger occupies 222-257; sequence LSCKWLEESTMNHPQKTCDRTFSSMHELVTHMTMEH. A C2H2-type 2; atypical zinc finger spans residues 266-293; the sequence is HICYWEECPRGGKSFKAKYKLVNHIRVH. C2H2-type zinc fingers lie at residues 299-323, 329-353, and 359-381; these read FPCPFPGCGKIFARSENLKIHKRTH, FKCEFEGCDRRFANSSDRKKHMHVH, and YICKVCDKSYTHPSSLRKHMKVH. The segment at 375–441 is disordered; it reads RKHMKVHESQ…LPPNFNEWYV (67 aa). The segment covering 383–399 has biased composition (low complexity); sequence SQGSDSSPAASSGYESA. Residues 406–429 show a composition bias toward polar residues; that stretch reads SANSEEPSKNSSATHQTNNNSHNT.

The protein belongs to the GLI C2H2-type zinc-finger protein family. First detected at early gastrula (stage 10.25) in the dorsal lip and prospective neural plate. Also expressed in the mesoderm at early gastrulation, with expression strongest on the dorsal side. Mesodermal expression continues at stage 12 but is hardly detectable after stage 14. As gastrulation proceeds, expression decreases in the dorsal lip and increases in the prospective neural plate. At the neural plate stage (stage 14), expressed strongly in the prospective mesencephalon and anterior rhombencephalon, after which expression becomes stronger in the anterior neural folds. At early tailbud stage (stage 20), expression becomes restricted to the dorsal region of forebrain, midbrain and hindbrain, and weakly to the dorsal trunk. After mid-tailbud stage, expression decreases in the diencephalon, appears in the lateral mesoderm of the tailbud region and becomes restricted in the dorsal part of the neural tube.

Its subcellular location is the nucleus. It localises to the cytoplasm. Functionally, probably acts as a transcriptional activator. May bind to the minimal GLI-consensus sequence 5'-GGGTGGTC-3'. Can determine the ectodermal cell fate and promote the earliest step of neural and neural crest development. Involved in establishing left-right asymmetry in the embryo. This chain is Zinc finger protein ZIC 3 (zic3), found in Xenopus laevis (African clawed frog).